A 305-amino-acid polypeptide reads, in one-letter code: Methionyl-tRNA formyltransferase (305 aa).

111-114 (SLLP) serves as a coordination point for (6S)-5,6,7,8-tetrahydrofolate.

It belongs to the Fmt family.

The catalysed reaction is L-methionyl-tRNA(fMet) + (6R)-10-formyltetrahydrofolate = N-formyl-L-methionyl-tRNA(fMet) + (6S)-5,6,7,8-tetrahydrofolate + H(+). Its function is as follows. Attaches a formyl group to the free amino group of methionyl-tRNA(fMet). The formyl group appears to play a dual role in the initiator identity of N-formylmethionyl-tRNA by promoting its recognition by IF2 and preventing the misappropriation of this tRNA by the elongation apparatus. The chain is Methionyl-tRNA formyltransferase from Campylobacter jejuni subsp. doylei (strain ATCC BAA-1458 / RM4099 / 269.97).